Consider the following 418-residue polypeptide: uncharacterized protein (418 aa).

Belongs to the poxviruses C4/C10 family.

This is an uncharacterized protein from Fowlpox virus (strain NVSL) (FPV).